A 733-amino-acid chain; its full sequence is Polyribonucleotide nucleotidyltransferase (733 aa).

Positions 404 to 424 (NYNMPPYSTGETGRVGSPKRR) are disordered. The Mg(2+) site is built by Asp-516 and Asp-522. A KH domain is found at 582–641 (PRIITVHIPVDKIGEVIGPKGKMINQIQDDTGANISIEDDGTIFIGADNGDSAESARSMI). The S1 motif domain occupies 653–725 (GERYLGTVVK…DRGKLSLVLA (73 aa)).

Belongs to the polyribonucleotide nucleotidyltransferase family. It depends on Mg(2+) as a cofactor.

The protein localises to the cytoplasm. It catalyses the reaction RNA(n+1) + phosphate = RNA(n) + a ribonucleoside 5'-diphosphate. In terms of biological role, involved in mRNA degradation. Catalyzes the phosphorolysis of single-stranded polyribonucleotides processively in the 3'- to 5'-direction. In Cutibacterium acnes (strain DSM 16379 / KPA171202) (Propionibacterium acnes), this protein is Polyribonucleotide nucleotidyltransferase.